Here is a 148-residue protein sequence, read N- to C-terminus: Deoxyuridine 5'-triphosphate nucleotidohydrolase (148 aa).

Substrate is bound by residues 67–69 (RSG), Asn-80, 84–86 (LID), and Met-94.

This sequence belongs to the dUTPase family. Mg(2+) is required as a cofactor.

It catalyses the reaction dUTP + H2O = dUMP + diphosphate + H(+). Its pathway is pyrimidine metabolism; dUMP biosynthesis; dUMP from dCTP (dUTP route): step 2/2. Its function is as follows. This enzyme is involved in nucleotide metabolism: it produces dUMP, the immediate precursor of thymidine nucleotides and it decreases the intracellular concentration of dUTP so that uracil cannot be incorporated into DNA. The polypeptide is Deoxyuridine 5'-triphosphate nucleotidohydrolase (Burkholderia lata (strain ATCC 17760 / DSM 23089 / LMG 22485 / NCIMB 9086 / R18194 / 383)).